The chain runs to 118 residues: Large ribosomal subunit protein uL18 (118 aa).

Belongs to the universal ribosomal protein uL18 family. As to quaternary structure, part of the 50S ribosomal subunit; part of the 5S rRNA/L5/L18/L25 subcomplex. Contacts the 5S and 23S rRNAs.

In terms of biological role, this is one of the proteins that bind and probably mediate the attachment of the 5S RNA into the large ribosomal subunit, where it forms part of the central protuberance. The chain is Large ribosomal subunit protein uL18 from Rickettsia akari (strain Hartford).